A 203-amino-acid polypeptide reads, in one-letter code: Recombination protein RecR (203 aa).

The C4-type zinc-finger motif lies at 57–72 (CARCNTFSETELCVLC). Residues 80–175 (DVLCVVEMPA…SVSRIARGLP (96 aa)) form the Toprim domain.

Belongs to the RecR family.

May play a role in DNA repair. It seems to be involved in an RecBC-independent recombinational process of DNA repair. It may act with RecF and RecO. In Laribacter hongkongensis (strain HLHK9), this protein is Recombination protein RecR.